The primary structure comprises 419 residues: Carboxypeptidase A1 (419 aa).

An N-terminal signal peptide occupies residues M1 to G16. The propeptide at N17–R110 is activation peptide. Residues T121–T414 enclose the Peptidase M14 domain. Zn(2+)-binding residues include H179 and E182. Substrate contacts are provided by residues H179 to E182, R237, and N254 to R255. Cysteines 248 and 271 form a disulfide. H306 provides a ligand contact to Zn(2+). Substrate contacts are provided by residues S307–Y308 and Y358. The Proton donor/acceptor role is filled by E380.

Belongs to the peptidase M14 family. In terms of assembly, monomer. May form a complex with proelastase 2. It depends on Zn(2+) as a cofactor.

It is found in the secreted. It catalyses the reaction Release of a C-terminal amino acid, but little or no action with -Asp, -Glu, -Arg, -Lys or -Pro.. It carries out the reaction leukotriene C4 + H2O = leukotriene F4 + glycine. Functionally, carboxypeptidase that catalyzes the release of a C-terminal amino acid, but has little or no action with -Asp, -Glu, -Arg, -Lys or -Pro. Catalyzes the conversion of leukotriene C4 to leukotriene F4 via the hydrolysis of an amide bond. This is Carboxypeptidase A1 from Rattus norvegicus (Rat).